A 456-amino-acid polypeptide reads, in one-letter code: Enolase (456 aa).

Position 164 (Gln-164) interacts with (2R)-2-phosphoglycerate. Glu-207 (proton donor) is an active-site residue. The Mg(2+) site is built by Asp-244, Glu-287, and Asp-314. Positions 339, 368, 369, and 390 each coordinate (2R)-2-phosphoglycerate. Lys-339 (proton acceptor) is an active-site residue.

Belongs to the enolase family. As to quaternary structure, component of the RNA degradosome, a multiprotein complex involved in RNA processing and mRNA degradation. It depends on Mg(2+) as a cofactor.

It is found in the cytoplasm. The protein resides in the secreted. It localises to the cell surface. The enzyme catalyses (2R)-2-phosphoglycerate = phosphoenolpyruvate + H2O. It functions in the pathway carbohydrate degradation; glycolysis; pyruvate from D-glyceraldehyde 3-phosphate: step 4/5. Functionally, catalyzes the reversible conversion of 2-phosphoglycerate (2-PG) into phosphoenolpyruvate (PEP). It is essential for the degradation of carbohydrates via glycolysis. The chain is Enolase from Francisella tularensis subsp. holarctica (strain OSU18).